Reading from the N-terminus, the 275-residue chain is uncharacterized protein (275 aa).

This is an uncharacterized protein from Acanthamoeba polyphaga mimivirus (APMV).